A 508-amino-acid chain; its full sequence is MMSEQGLVEIVQIAVADLNHEGHQTDVLENNEDSDQPGRKRARIEISQETSIKSMLISISQAICQRLDSMEAKLQVLEVTCRGLVEKLDTVMGKNQSTTQVPMVSGSPFGATQTCDKVRCVVPQTNVIVSGDRAKTEETSPRTSDSLENLLSNTVGRGRQKTIVLKVPVQEEIQDDQESGSETSDSVSNSGQPQNNNNVTLITLNSEEDYPTGTWLGDENNPEMRVRCPVSPADMLHISTNCRTAEKMALTLLDYLFHREVQAVSNLSGQGKHGKKQLDPLMIYGIRCHLFFKFAITESDWYRIKQSIDSKCRTAWRRKQRGQSLAVKSFSRRTPASQSSSDGVSAAETSAIETSTQQALHYALAGATQQVQIHRIGEDGQVQVIPQGHLHIAQVPQGEQVQITQDSEGNLQIHQVHVGQDGQVNVLRGPQLIAVASTDGTGGVDASPLQANDIQVQYVQLGTVTDHTGAVQAEALTPALQAEMDVKEAIQLQQAENGEVVQIQMPGT.

Residues 65–90 (QRLDSMEAKLQVLEVTCRGLVEKLDT) are a coiled coil. Disordered stretches follow at residues 132 to 153 (DRAK…LLSN) and 168 to 198 (PVQE…NNNN). Polar residues-rich tracts occupy residues 141-153 (PRTS…LLSN) and 180-198 (GSET…NNNN). A BEN domain is found at 223–319 (EMRVRCPVSP…SKCRTAWRRK (97 aa)). Positions 326 to 350 (AVKSFSRRTPASQSSSDGVSAAETS) are disordered. Residues 332-350 (RRTPASQSSSDGVSAAETS) show a composition bias toward polar residues.

It belongs to the BANP/SMAR1 family.

It localises to the nucleus. In terms of biological role, DNA-binding protein which may repress cyclin D1 transcription by recruiting HDAC1 to its promoter, thereby diminishing H3K9ac, H3S10ph and H4K8ac levels. Promotes TP53 activation, which causes cell cycle arrest. The polypeptide is Protein BANP (banp) (Danio rerio (Zebrafish)).